The primary structure comprises 151 residues: 6,7-dimethyl-8-ribityllumazine synthase (151 aa).

Residues phenylalanine 15, 47-49 (TFE), and 71-73 (AVI) contribute to the 5-amino-6-(D-ribitylamino)uracil site. (2S)-2-hydroxy-3-oxobutyl phosphate is bound at residue 76–77 (ET). The Proton donor role is filled by histidine 79. Residue leucine 104 coordinates 5-amino-6-(D-ribitylamino)uracil. (2S)-2-hydroxy-3-oxobutyl phosphate is bound at residue arginine 119.

This sequence belongs to the DMRL synthase family.

The catalysed reaction is (2S)-2-hydroxy-3-oxobutyl phosphate + 5-amino-6-(D-ribitylamino)uracil = 6,7-dimethyl-8-(1-D-ribityl)lumazine + phosphate + 2 H2O + H(+). Its pathway is cofactor biosynthesis; riboflavin biosynthesis; riboflavin from 2-hydroxy-3-oxobutyl phosphate and 5-amino-6-(D-ribitylamino)uracil: step 1/2. Its function is as follows. Catalyzes the formation of 6,7-dimethyl-8-ribityllumazine by condensation of 5-amino-6-(D-ribitylamino)uracil with 3,4-dihydroxy-2-butanone 4-phosphate. This is the penultimate step in the biosynthesis of riboflavin. This chain is 6,7-dimethyl-8-ribityllumazine synthase, found in Metallosphaera sedula (strain ATCC 51363 / DSM 5348 / JCM 9185 / NBRC 15509 / TH2).